The primary structure comprises 349 residues: Core protein VP7 (349 aa).

N-linked (GlcNAc...) asparagine; by host glycosylation is found at asparagine 193 and asparagine 287.

The protein belongs to the orbivirus VP7 family. In terms of assembly, homotrimer that assemble in a complex of 260 capsomers on an inner scaffold composed of VP3.

It is found in the virion. Functionally, the VP7 protein is one of the five proteins (with VP1, VP3, VP4, and VP6) which form the inner capsid of the virus. This is Core protein VP7 (Segment-7) from Antilocapra americana (Pronghorn).